The following is a 101-amino-acid chain: uncharacterized protein (101 aa).

An N-terminal signal peptide occupies residues 1–19 (MKFKYLSTPLLFSALLFSA). Residue C20 is the site of N-palmitoyl cysteine attachment. C20 carries the S-diacylglycerol cysteine lipid modification.

It belongs to the MG439/MG440 family.

The protein resides in the cell membrane. This is an uncharacterized protein from Mycoplasma pneumoniae (strain ATCC 29342 / M129 / Subtype 1) (Mycoplasmoides pneumoniae).